The sequence spans 739 residues: MSLMLEPNPTQIKEERIYAEMGLTDEEFAMVEKILGRLPNYTETGLFSVMWSEHCSYKNSKPVLRKFPTTGERVLQGPGEGAGIVDIGDNQAVVFKMESHNHPSAIEPYQGAATGVGGIIRDVFSMGARPVALLNSLRFGELQSPRVKYLFEEVVAGIAGYGNCIGIPTVGGEVQFDPCYEGNPLVNAMCVGLINHEDIKKGQAHGAGNTVMYVGASTGRDGIHGATFASEELSESSEAKRPAVQVGDPFMEKLLIEACLELIQSDALVGIQDMGAAGLTSSSAEMASKAGMGIEMYLDDVPQRETGMTPYEMMLSESQERMLIVVKKGREQEIVDLFEKYGLAAVTMGKVTEDKMLRLFHKGEMVAEVPADALAEEAPIYHKPSQEAAYFAEFQQMKMETPKVENYKETLFALLQQPTIASKEWVYDQYDYQVRTSTVVTPGSDAAVVRVRGTEKGLAMTTDCNSRYIYLDPEVGGKIAVAEAARNIVCSGGEPLAITDCLNFGNPEKPEIFWQIEKSVDGMSEACRTLQTPVIGGNVSMYNERSGEAVYPTPTVGMVGLVHDLKHVTTQEFKQAGDLVYVIGETKAEFGGSELQKMLHGKIFGQSPSIDLDVELKRQKQILAAIQAGLVQSAHDVAEGGLAVAISESAIGANGLGATVKLDGEATAALFAESQSRFVITVKRENKEAFEKAVEAIQVGEVTNTNEVTIHNEENEVLLTANVDEMRKAWKGAIPCLLK.

Residue histidine 54 is part of the active site. The ATP site is built by tyrosine 57 and lysine 96. Glutamate 98 is a Mg(2+) binding site. Substrate contacts are provided by residues 99–102 (SHNH) and arginine 121. Histidine 100 serves as the catalytic Proton acceptor. Residue aspartate 122 participates in Mg(2+) binding. Glutamine 245 serves as a coordination point for substrate. Aspartate 273 lines the Mg(2+) pocket. 317–319 (ESQ) serves as a coordination point for substrate. Residues aspartate 500 and glycine 537 each contribute to the ATP site. Mg(2+) is bound at residue asparagine 538. Serine 540 is a substrate binding site.

Belongs to the FGAMS family. In terms of assembly, monomer. Part of the FGAM synthase complex composed of 1 PurL, 1 PurQ and 2 PurS subunits.

It is found in the cytoplasm. The catalysed reaction is N(2)-formyl-N(1)-(5-phospho-beta-D-ribosyl)glycinamide + L-glutamine + ATP + H2O = 2-formamido-N(1)-(5-O-phospho-beta-D-ribosyl)acetamidine + L-glutamate + ADP + phosphate + H(+). It functions in the pathway purine metabolism; IMP biosynthesis via de novo pathway; 5-amino-1-(5-phospho-D-ribosyl)imidazole from N(2)-formyl-N(1)-(5-phospho-D-ribosyl)glycinamide: step 1/2. In terms of biological role, part of the phosphoribosylformylglycinamidine synthase complex involved in the purines biosynthetic pathway. Catalyzes the ATP-dependent conversion of formylglycinamide ribonucleotide (FGAR) and glutamine to yield formylglycinamidine ribonucleotide (FGAM) and glutamate. The FGAM synthase complex is composed of three subunits. PurQ produces an ammonia molecule by converting glutamine to glutamate. PurL transfers the ammonia molecule to FGAR to form FGAM in an ATP-dependent manner. PurS interacts with PurQ and PurL and is thought to assist in the transfer of the ammonia molecule from PurQ to PurL. The protein is Phosphoribosylformylglycinamidine synthase subunit PurL of Bacillus cereus (strain Q1).